The chain runs to 235 residues: Mediator of RNA polymerase II transcription subunit 29 (235 aa).

The segment covering 1 to 14 (MMNQMGMMMQQQGV) has biased composition (low complexity). The segment at 1 to 54 (MMNQMGMMMQQQGVGVPGGPGGVGGVGMPGPGGVGVAPGMMQSPQMQQAQQQQV) is disordered. Residues 15-36 (GVPGGPGGVGGVGMPGPGGVGV) show a composition bias toward gly residues. Low complexity predominate over residues 37 to 54 (APGMMQSPQMQQAQQQQV).

This sequence belongs to the Mediator complex subunit 29 family. In terms of assembly, component of the Mediator complex.

It localises to the nucleus. In terms of biological role, component of the Mediator complex, a coactivator involved in the regulated transcription of nearly all RNA polymerase II-dependent genes. Mediator functions as a bridge to convey information from gene-specific regulatory proteins to the basal RNA polymerase II transcription machinery. Mediator is recruited to promoters by direct interactions with regulatory proteins and serves as a scaffold for the assembly of a functional preinitiation complex with RNA polymerase II and the general transcription factors. The sequence is that of Mediator of RNA polymerase II transcription subunit 29 (ix) from Anopheles gambiae (African malaria mosquito).